The primary structure comprises 248 residues: Histidine utilization repressor (248 aa).

Positions 18-86 (APLYARVKQM…QGVGTFVAEP (69 aa)) constitute an HTH gntR-type domain. Positions 46 to 65 (ESELVNELGFSRMTINRALR) form a DNA-binding region, H-T-H motif.

It participates in amino-acid degradation; L-histidine degradation into L-glutamate [regulation]. In terms of biological role, repressor which binds to the hutP region in the histidine utilization (hut) operon. It blocks the expression of all the hut genes in the absence of inducer. The protein is Histidine utilization repressor (hutC) of Pseudomonas putida (Arthrobacter siderocapsulatus).